A 65-amino-acid chain; its full sequence is Large ribosomal subunit protein bL31 (65 aa).

Residues C16, C18, C36, and C39 each coordinate Zn(2+).

This sequence belongs to the bacterial ribosomal protein bL31 family. Type A subfamily. As to quaternary structure, part of the 50S ribosomal subunit. It depends on Zn(2+) as a cofactor.

Binds the 23S rRNA. The polypeptide is Large ribosomal subunit protein bL31 (Geotalea uraniireducens (strain Rf4) (Geobacter uraniireducens)).